A 1486-amino-acid chain; its full sequence is Chromosome partition protein MukB (1486 aa).

34-41 (GGNGAGKS) provides a ligand contact to ATP. Coiled coils occupy residues 326–418 (LEAD…QYNQ), 444–480 (LETF…QAYQ), and 509–603 (RHLA…RAPV). The segment at 666-783 (PGGSEDQRLN…EVPLFGRAAR (118 aa)) is flexible hinge. Coiled coils occupy residues 835 to 923 (EAEI…AKLE), 977 to 1115 (EMLS…TAKA), and 1209 to 1266 (VEAI…QNVS).

Belongs to the SMC family. MukB subfamily. As to quaternary structure, homodimerization via its hinge domain. Binds to DNA via its C-terminal region. Interacts, and probably forms a ternary complex, with MukE and MukF via its C-terminal region. The complex formation is stimulated by calcium or magnesium. Interacts with tubulin-related protein FtsZ.

Its subcellular location is the cytoplasm. It localises to the nucleoid. Functionally, plays a central role in chromosome condensation, segregation and cell cycle progression. Functions as a homodimer, which is essential for chromosome partition. Involved in negative DNA supercoiling in vivo, and by this means organize and compact chromosomes. May achieve or facilitate chromosome segregation by condensation DNA from both sides of a centrally located replisome during cell division. The chain is Chromosome partition protein MukB from Escherichia coli O17:K52:H18 (strain UMN026 / ExPEC).